Here is a 250-residue protein sequence, read N- to C-terminus: 3-deoxy-manno-octulosonate cytidylyltransferase (250 aa).

Belongs to the KdsB family.

The protein localises to the cytoplasm. The catalysed reaction is 3-deoxy-alpha-D-manno-oct-2-ulosonate + CTP = CMP-3-deoxy-beta-D-manno-octulosonate + diphosphate. It functions in the pathway nucleotide-sugar biosynthesis; CMP-3-deoxy-D-manno-octulosonate biosynthesis; CMP-3-deoxy-D-manno-octulosonate from 3-deoxy-D-manno-octulosonate and CTP: step 1/1. The protein operates within bacterial outer membrane biogenesis; lipopolysaccharide biosynthesis. Its function is as follows. Activates KDO (a required 8-carbon sugar) for incorporation into bacterial lipopolysaccharide in Gram-negative bacteria. The polypeptide is 3-deoxy-manno-octulosonate cytidylyltransferase (Legionella pneumophila subsp. pneumophila (strain Philadelphia 1 / ATCC 33152 / DSM 7513)).